A 571-amino-acid chain; its full sequence is S100P-binding protein (571 aa).

A compositionally biased stretch (acidic residues) spans 270 to 280; it reads SDIPFDGDIDE. 2 disordered regions span residues 270-312 and 356-385; these read SDIP…LESV and NGQNNSNKVPLPPSDTAPGPQLPADPCSQS. A compositionally biased stretch (polar residues) spans 299-309; that stretch reads TSESTPASSEL. Residues 365–378 are compositionally biased toward pro residues; it reads PLPPSDTAPGPQLP.

The protein localises to the nucleus. This is S100P-binding protein (s100pbp) from Xenopus tropicalis (Western clawed frog).